The chain runs to 393 residues: MWLLIIACAVILVIGILEKRRHQKNIDALPVRVNINGIRGKSTVTRLTTGILIEAGYKTVGKTTGTDARMIYWDTPEEKPIKRKPQGPNIGEQKEVMRETVERGANAIVSECMAVNPDYQIIFQEELLQANIGVIVNVLEDHMDVMGPTLDEIAEAFTATIPYNGHLVITDSEYTEFFKQKAKERNTKVIIADNSKITDEYLRKFEYMVFPDNASLALGVAQALGIDEETAFKGMLNAPPDPGAMRILPLISPSEPGHFVNGFAANDASSTLNIWKRVKEIGYPTDDPIIIMNCRADRVDRTQQFANDVLPYIEASELILIGETTEPIVKAYEEGKIPADKLHDLEYKSTDEIMELLKKRMHNRVIYGVGNIHGAAEPLIEKIHEYKVKQLVS.

Requires Mn(2+) as cofactor.

Functionally, catalyzes the biosynthesis of PGA (gamma-polyglutamic acid) from L-glutamate. Both the 44-kDa and the 33-kDa forms are required for PGA synthesis. The sequence is that of PGA synthase CapB (capB) from Bacillus subtilis (strain 168).